We begin with the raw amino-acid sequence, 317 residues long: Melanocyte-stimulating hormone receptor (317 aa).

Residues 1–37 lie on the Extracellular side of the membrane; that stretch reads MPAQGSQRSLLGSLNSTLMATSSLGLSANQSGPQCLE. Asn-15 and Asn-29 each carry an N-linked (GlcNAc...) asparagine glycan. The chain crosses the membrane as a helical span at residues 38–63; it reads VSVPDGLFLCLGLVSLVENMLVVAAI. Residues 64 to 72 lie on the Cytoplasmic side of the membrane; that stretch reads AKNRNLHSP. A helical membrane pass occupies residues 73-93; that stretch reads MYCFICCLALSDLLVSVSNVL. At 94 to 118 the chain is on the extracellular side; it reads ETAVMLLLEAGALAAQATVVQQLDN. A helical membrane pass occupies residues 119–140; it reads IIDVLVCSSMVSSLCFLGAIAM. Residues 141–163 lie on the Cytoplasmic side of the membrane; the sequence is DRYISIFYALRYHSIVTLSRAQW. The helical transmembrane segment at 164-183 threads the bilayer; it reads ATAAVWAAGILSSTLFIAYY. Over 184-191 the chain is Extracellular; sequence DHTAVLLC. A helical membrane pass occupies residues 192–211; that stretch reads LVVFFLAMLVLMAVLYAHML. At 212–240 the chain is on the cytoplasmic side; sequence TQACQHVQGITRLHKRQHLVQQGFGLKGA. A helical transmembrane segment spans residues 241–266; it reads ATLTILLGVFLLCWGPFFLHLTLIAV. Residues 267–279 lie on the Extracellular side of the membrane; it reads CPQHPTCSCVFKN. Residues 280–300 form a helical membrane-spanning segment; it reads FKLFLALIICNAIVDPLIYAF. Topologically, residues 301 to 317 are cytoplasmic; the sequence is RXQELRKTLKEVLLFSW.

It belongs to the G-protein coupled receptor 1 family. In terms of assembly, interacts with MGRN1, but does not undergo MGRN1-mediated ubiquitination; this interaction competes with GNAS-binding and thus inhibits agonist-induced cAMP production. Interacts with OPN3; the interaction results in a decrease in MC1R-mediated cAMP signaling and ultimately a decrease in melanin production in melanocytes.

It is found in the cell membrane. In terms of biological role, receptor for MSH (alpha, beta and gamma) and ACTH. The activity of this receptor is mediated by G proteins which activate adenylate cyclase. Mediates melanogenesis, the production of eumelanin (black/brown) and phaeomelanin (red/yellow), via regulation of cAMP signaling in melanocytes. The sequence is that of Melanocyte-stimulating hormone receptor (MC1R) from Loris tardigradus (Slender loris).